The sequence spans 128 residues: Large ribosomal subunit protein bL19 (128 aa).

Belongs to the bacterial ribosomal protein bL19 family.

This protein is located at the 30S-50S ribosomal subunit interface and may play a role in the structure and function of the aminoacyl-tRNA binding site. This is Large ribosomal subunit protein bL19 from Azoarcus sp. (strain BH72).